The sequence spans 456 residues: Ribosomal protein uS12 methylthiotransferase RimO (456 aa).

One can recognise an MTTase N-terminal domain in the interval 11 to 126 (PKVGFVSLGC…VMQAVHTHLP (116 aa)). [4Fe-4S] cluster contacts are provided by C20, C56, C85, C157, C161, and C164. The 242-residue stretch at 143–384 (LTPKHYAYLK…MEVAEEVSAR (242 aa)) folds into the Radical SAM core domain. The TRAM domain occupies 387–456 (QRKVGQTLRV…DGHDLWGEVA (70 aa)).

The protein belongs to the methylthiotransferase family. RimO subfamily. Requires [4Fe-4S] cluster as cofactor.

Its subcellular location is the cytoplasm. The enzyme catalyses L-aspartate(89)-[ribosomal protein uS12]-hydrogen + (sulfur carrier)-SH + AH2 + 2 S-adenosyl-L-methionine = 3-methylsulfanyl-L-aspartate(89)-[ribosomal protein uS12]-hydrogen + (sulfur carrier)-H + 5'-deoxyadenosine + L-methionine + A + S-adenosyl-L-homocysteine + 2 H(+). Functionally, catalyzes the methylthiolation of an aspartic acid residue of ribosomal protein uS12. In Cupriavidus metallidurans (strain ATCC 43123 / DSM 2839 / NBRC 102507 / CH34) (Ralstonia metallidurans), this protein is Ribosomal protein uS12 methylthiotransferase RimO.